We begin with the raw amino-acid sequence, 627 residues long: Glutamine--fructose-6-phosphate aminotransferase [isomerizing] (627 aa).

Cysteine 2 (nucleophile; for GATase activity) is an active-site residue. Residues 2–224 (CGIVGYIGTQ…NGEIARLTPL (223 aa)) enclose the Glutamine amidotransferase type-2 domain. SIS domains lie at 293–442 (LPEN…HRQT) and 476–617 (LAHE…VDQP). The active-site For Fru-6P isomerization activity is the lysine 622.

As to quaternary structure, homodimer.

It is found in the cytoplasm. The catalysed reaction is D-fructose 6-phosphate + L-glutamine = D-glucosamine 6-phosphate + L-glutamate. Catalyzes the first step in hexosamine metabolism, converting fructose-6P into glucosamine-6P using glutamine as a nitrogen source. The protein is Glutamine--fructose-6-phosphate aminotransferase [isomerizing] of Nostoc sp. (strain PCC 9229).